Here is a 383-residue protein sequence, read N- to C-terminus: Erythronate-4-phosphate dehydrogenase (383 aa).

Substrate-binding residues include Ser45 and Thr66. Residues Asp146 and Thr175 each contribute to the NAD(+) site. Arg208 is a catalytic residue. NAD(+) is bound at residue Asp232. The active site involves Glu237. His254 (proton donor) is an active-site residue. Gly257 is an NAD(+) binding site.

The protein belongs to the D-isomer specific 2-hydroxyacid dehydrogenase family. PdxB subfamily. Homodimer.

It is found in the cytoplasm. The enzyme catalyses 4-phospho-D-erythronate + NAD(+) = (R)-3-hydroxy-2-oxo-4-phosphooxybutanoate + NADH + H(+). It functions in the pathway cofactor biosynthesis; pyridoxine 5'-phosphate biosynthesis; pyridoxine 5'-phosphate from D-erythrose 4-phosphate: step 2/5. Catalyzes the oxidation of erythronate-4-phosphate to 3-hydroxy-2-oxo-4-phosphonooxybutanoate. The protein is Erythronate-4-phosphate dehydrogenase of Chromohalobacter salexigens (strain ATCC BAA-138 / DSM 3043 / CIP 106854 / NCIMB 13768 / 1H11).